Reading from the N-terminus, the 45-residue chain is Large ribosomal subunit protein bL34 (45 aa).

It belongs to the bacterial ribosomal protein bL34 family.

This is Large ribosomal subunit protein bL34 from Beutenbergia cavernae (strain ATCC BAA-8 / DSM 12333 / CCUG 43141 / JCM 11478 / NBRC 16432 / NCIMB 13614 / HKI 0122).